The chain runs to 156 residues: Deoxyuridine 5'-triphosphate nucleotidohydrolase (156 aa).

Residues 76–78, Asn-89, 93–95, and Lys-103 contribute to the substrate site; these read RSG and TVD.

Belongs to the dUTPase family. Mg(2+) is required as a cofactor.

The catalysed reaction is dUTP + H2O = dUMP + diphosphate + H(+). It functions in the pathway pyrimidine metabolism; dUMP biosynthesis; dUMP from dCTP (dUTP route): step 2/2. Its function is as follows. This enzyme is involved in nucleotide metabolism: it produces dUMP, the immediate precursor of thymidine nucleotides and it decreases the intracellular concentration of dUTP so that uracil cannot be incorporated into DNA. The protein is Deoxyuridine 5'-triphosphate nucleotidohydrolase of Rhizobium etli (strain CIAT 652).